Consider the following 230-residue polypeptide: Androgen-dependent TFPI-regulating protein (230 aa).

Over 1-3 (MTK) the chain is Cytoplasmic. A helical membrane pass occupies residues 4-24 (TSTCIYHFLVLSWYTFLNYYI). At 25-46 (SQEGKDEVKPKILANGARWKYM) the chain is on the extracellular side. The helical transmembrane segment at 47–67 (TLLNLLLQTIFYGVTCLDDVL) threads the bilayer. At 68-85 (KRTKGGKDIKFLTAFRDL) the chain is on the cytoplasmic side. A helical membrane pass occupies residues 86 to 106 (LFTTLAFPVSTFVFLAFWILF). Residues 107–119 (LYNRDLIYPKVLD) lie on the Extracellular side of the membrane. The chain crosses the membrane as a helical span at residues 120 to 140 (TVIPVWLNHAMHTFIFPITLA). The Cytoplasmic portion of the chain corresponds to 141-154 (EVVLRPHSYPSKKT). Residues 155–175 (GLTLLAAASIAYISRILWLYF) form a helical membrane-spanning segment. The Extracellular portion of the chain corresponds to 176–189 (ETGTWVYPVFAKLS). A helical transmembrane segment spans residues 190–210 (LLGLAAFFSLSYVFIASIYLL). The Cytoplasmic portion of the chain corresponds to 211–230 (GEKLNHWKWGDMRQPRKKRK).

This sequence belongs to the AIG1 family. Expressed in cultured endothelial cells and in placenta.

It localises to the cell membrane. The catalysed reaction is 9-hexadecanoyloxy-octadecanoate + H2O = 9-hydroxy-octadecanoate + hexadecanoate + H(+). The enzyme catalyses 12-hexadecanoyloxy-octadecanoate + H2O = 12-hydroxyoctadecanoate + hexadecanoate + H(+). It catalyses the reaction 9-(9Z-hexadecenoyloxy)-octadecanoate + H2O = (9Z)-hexadecenoate + 9-hydroxy-octadecanoate + H(+). It carries out the reaction 12-(9Z-hexadecenoyloxy)-octadecanoate + H2O = 12-hydroxyoctadecanoate + (9Z)-hexadecenoate + H(+). The catalysed reaction is 13-(9Z-hexadecenoyloxy)-octadecanoate + H2O = 13-hydroxy-octadecanoate + (9Z)-hexadecenoate + H(+). The enzyme catalyses 9-octadecanoyloxy-octadecanoate + H2O = 9-hydroxy-octadecanoate + octadecanoate + H(+). It catalyses the reaction 12-octadecanoyloxy-octadecanoate + H2O = 12-hydroxyoctadecanoate + octadecanoate + H(+). It carries out the reaction 13-octadecanoyloxy-octadecanoate + H2O = 13-hydroxy-octadecanoate + octadecanoate + H(+). The catalysed reaction is 9-(9Z-octadecenoyloxy)-octadecanoate + H2O = 9-hydroxy-octadecanoate + (9Z)-octadecenoate + H(+). The enzyme catalyses 12-(9Z-octadecenoyloxy)-octadecanoate + H2O = 12-hydroxyoctadecanoate + (9Z)-octadecenoate + H(+). It catalyses the reaction 13-(9Z-octadecenoyloxy)-octadecanoate + H2O = 13-hydroxy-octadecanoate + (9Z)-octadecenoate + H(+). It carries out the reaction 5-(9Z-octadecenoyloxy)-octadecanoate + H2O = 5-hydroxy-octadecanoate + (9Z)-octadecenoate + H(+). With respect to regulation, inhibited by N-hydroxyhydantoin carbamate JJH260 and beta-lactone KC01. Its function is as follows. Hydrolyzes bioactive fatty-acid esters of hydroxy-fatty acids (FAHFAs), but not other major classes of lipids. Show a preference for FAHFAs with branching distal from the carboxylate head group of the lipids. Regulates the expression and the cell-associated anticoagulant activity of the inhibitor TFPI in endothelial cells (in vitro). The polypeptide is Androgen-dependent TFPI-regulating protein (ADTRP) (Homo sapiens (Human)).